The sequence spans 279 residues: Release factor glutamine methyltransferase (279 aa).

S-adenosyl-L-methionine is bound by residues 118–122, Asp141, and Asn182; that span reads GTGSG. Position 182 to 185 (182 to 185) interacts with substrate; the sequence is NPPY.

The protein belongs to the protein N5-glutamine methyltransferase family. PrmC subfamily.

The enzyme catalyses L-glutaminyl-[peptide chain release factor] + S-adenosyl-L-methionine = N(5)-methyl-L-glutaminyl-[peptide chain release factor] + S-adenosyl-L-homocysteine + H(+). Functionally, methylates the class 1 translation termination release factors RF1/PrfA and RF2/PrfB on the glutamine residue of the universally conserved GGQ motif. The polypeptide is Release factor glutamine methyltransferase (Streptococcus pneumoniae (strain ATCC BAA-255 / R6)).